The following is a 393-amino-acid chain: Formate-dependent phosphoribosylglycinamide formyltransferase (393 aa).

Residues 22 to 23 (EL) and E82 contribute to the N(1)-(5-phospho-beta-D-ribosyl)glycinamide site. Residues R114, K155, 160-165 (SSGKGQ), 195-198 (EGFV), and E203 each bind ATP. The 190-residue stretch at 119–308 (RLAAEELGLP…EFALHVRAIL (190 aa)) folds into the ATP-grasp domain. E267 and E279 together coordinate Mg(2+). Residues D286, K356, and 363–364 (RR) contribute to the N(1)-(5-phospho-beta-D-ribosyl)glycinamide site.

This sequence belongs to the PurK/PurT family. Homodimer.

The catalysed reaction is N(1)-(5-phospho-beta-D-ribosyl)glycinamide + formate + ATP = N(2)-formyl-N(1)-(5-phospho-beta-D-ribosyl)glycinamide + ADP + phosphate + H(+). The protein operates within purine metabolism; IMP biosynthesis via de novo pathway; N(2)-formyl-N(1)-(5-phospho-D-ribosyl)glycinamide from N(1)-(5-phospho-D-ribosyl)glycinamide (formate route): step 1/1. Functionally, involved in the de novo purine biosynthesis. Catalyzes the transfer of formate to 5-phospho-ribosyl-glycinamide (GAR), producing 5-phospho-ribosyl-N-formylglycinamide (FGAR). Formate is provided by PurU via hydrolysis of 10-formyl-tetrahydrofolate. The sequence is that of Formate-dependent phosphoribosylglycinamide formyltransferase from Nitratidesulfovibrio vulgaris (strain ATCC 29579 / DSM 644 / CCUG 34227 / NCIMB 8303 / VKM B-1760 / Hildenborough) (Desulfovibrio vulgaris).